The primary structure comprises 293 residues: Ribulose bisphosphate carboxylase/oxygenase activase, chloroplastic (293 aa).

75–82 is an ATP binding site; sequence PGTGKTTV.

This sequence belongs to the CbxX/CfxQ family. Forms homooligomers. Forms heterohexameric rings with the nuclear-encoded Rca subunit consisting of 3 of each nuclear- and plastidial-encoded subunits that alternate in the ring.

The protein resides in the plastid. It localises to the chloroplast. Its function is as follows. Required for the expression of ribulose 1,5-bisphosphate carboxylase/oxygenase (RuBisCo). ATPase involved in the activation of red-type RuBisCo, which tends to form inactive complexes with its substrate ribulose 1,5-bisphosphate (RuBP). Catalyzes the release of RuBP from inhibited RuBisCo in an ATP-dependent manner. Activation of RuBisCO involves the ATP-dependent carboxylation of the epsilon-amino group of lysine leading to a carbamate structure. The nuclear-encoded subunit plays a more critical role in activase function than the plastidial-encoded subunit. The chain is Ribulose bisphosphate carboxylase/oxygenase activase, chloroplastic from Cyanidioschyzon merolae (strain NIES-3377 / 10D) (Unicellular red alga).